The chain runs to 994 residues: Leucine-rich repeat receptor-like kinase protein FLORAL ORGAN NUMBER1 (994 aa).

A signal peptide spans 1–17 (MPPTLLLLLLLLPPSLA). 21 LRR repeats span residues 73–93 (AINL…IALL), 94–117 (DSLA…LPTL), 118–141 (PSLR…DSGG), 147–171 (FPSL…SASH), 172–194 (ARLR…SYGD), 195–219 (LAAL…LSRL), 244–268 (LGAL…LGRL), 269–292 (QRLD…LGDL), 293–316 (SSLA…LANL), 318–340 (NLKL…VAGF), 341–364 (AQLE…LGKN), 365–388 (GRLK…LCAG), 390–412 (RLEM…LGDC), 413–436 (KTLT…LFNL), 438–459 (QANM…VIGG), 460–483 (DKIG…IGNL), 484–507 (PALQ…IGNL), 509–531 (NLSR…LIRC), 533–555 (SLAA…ITSL), 556–579 (KILC…MSNM), and 581–604 (SLTT…QFLV). 5 N-linked (GlcNAc...) asparagine glycosylation sites follow: Asn75, Asn98, Asn124, Asn129, and Asn159. N-linked (GlcNAc...) asparagine glycosylation occurs at Asn256. Asn315 carries N-linked (GlcNAc...) asparagine glycosylation. Asn352 carries N-linked (GlcNAc...) asparagine glycosylation. N-linked (GlcNAc...) asparagine glycans are attached at residues Asn495, Asn509, and Asn514. N-linked (GlcNAc...) asparagine glycosylation is found at Asn562 and Asn578. Residue Asn606 is glycosylated (N-linked (GlcNAc...) asparagine). The chain crosses the membrane as a helical span at residues 647-667 (KKMLVALVAAFAAVAVAFLGA). In terms of domain architecture, Protein kinase spans 704–978 (VKEDNIIGKG…TMREVVHMLS (275 aa)). ATP contacts are provided by residues 710-718 (IGKGGAGIV) and Lys731. Asp828 serves as the catalytic Proton acceptor.

The protein belongs to the protein kinase superfamily. Ser/Thr protein kinase family. As to expression, expressed in shoot apical meristem, and after transition to the reproductive phase, detected in the inflorescence and the floral meristems. Expressed uniformly throughout the meristems. Expressed also in floral organ primordia, such as the palea, lemma, lodicules, stamens, carpels and ovules.

It localises to the membrane. The enzyme catalyses L-seryl-[protein] + ATP = O-phospho-L-seryl-[protein] + ADP + H(+). It carries out the reaction L-threonyl-[protein] + ATP = O-phospho-L-threonyl-[protein] + ADP + H(+). In terms of biological role, receptor-like kinase protein that regulates the size of the floral meristem. The protein is Leucine-rich repeat receptor-like kinase protein FLORAL ORGAN NUMBER1 (FON1) of Oryza sativa subsp. japonica (Rice).